Reading from the N-terminus, the 124-residue chain is MVRISGVDLPRNKRIQIGLTSIFGIGNTSADKILTTANLSPDIRCSDLTDEQVSSLRTIIDESYQTEGDLRRVYSLNIKRLTEIGSAAGRRHRVNLPVRGQRTRTNARTRKGKVKTAVAKKKGR.

Residues 100 to 124 (GQRTRTNARTRKGKVKTAVAKKKGR) are disordered. Residues 101–124 (QRTRTNARTRKGKVKTAVAKKKGR) are compositionally biased toward basic residues.

Belongs to the universal ribosomal protein uS13 family. In terms of assembly, part of the 30S ribosomal subunit.

The protein resides in the plastid. It is found in the chloroplast. In terms of biological role, located at the top of the head of the 30S subunit, it contacts several helices of the 16S rRNA. The chain is Small ribosomal subunit protein uS13c from Emiliania huxleyi (Coccolithophore).